Here is a 465-residue protein sequence, read N- to C-terminus: Ribulose bisphosphate carboxylase large chain (465 aa).

K4 bears the N6,N6,N6-trimethyllysine mark. Substrate contacts are provided by N113 and T163. The Proton acceptor role is filled by K165. K167 contributes to the substrate binding site. Positions 191, 193, and 194 each coordinate Mg(2+). N6-carboxylysine is present on K191. Residue H284 is the Proton acceptor of the active site. Substrate contacts are provided by R285, H317, and S369.

It belongs to the RuBisCO large chain family. Type I subfamily. As to quaternary structure, heterohexadecamer of 8 large chains and 8 small chains; disulfide-linked. The disulfide link is formed within the large subunit homodimers. Requires Mg(2+) as cofactor. The disulfide bond which can form in the large chain dimeric partners within the hexadecamer appears to be associated with oxidative stress and protein turnover.

The protein resides in the plastid. The protein localises to the chloroplast. The catalysed reaction is 2 (2R)-3-phosphoglycerate + 2 H(+) = D-ribulose 1,5-bisphosphate + CO2 + H2O. The enzyme catalyses D-ribulose 1,5-bisphosphate + O2 = 2-phosphoglycolate + (2R)-3-phosphoglycerate + 2 H(+). RuBisCO catalyzes two reactions: the carboxylation of D-ribulose 1,5-bisphosphate, the primary event in carbon dioxide fixation, as well as the oxidative fragmentation of the pentose substrate in the photorespiration process. Both reactions occur simultaneously and in competition at the same active site. The protein is Ribulose bisphosphate carboxylase large chain of Epacris sp.